A 360-amino-acid chain; its full sequence is Peptide chain release factor 1 (360 aa).

N5-methylglutamine is present on Q235. The tract at residues 285 to 313 (KRQQAEASTRRNLLGSGDRSDRNRTYNFP) is disordered.

Belongs to the prokaryotic/mitochondrial release factor family. In terms of processing, methylated by PrmC. Methylation increases the termination efficiency of RF1.

Its subcellular location is the cytoplasm. Functionally, peptide chain release factor 1 directs the termination of translation in response to the peptide chain termination codons UAG and UAA. The protein is Peptide chain release factor 1 of Shigella boydii serotype 18 (strain CDC 3083-94 / BS512).